A 142-amino-acid chain; its full sequence is Large ribosomal subunit protein uL13 (142 aa).

This sequence belongs to the universal ribosomal protein uL13 family. In terms of assembly, part of the 50S ribosomal subunit.

Functionally, this protein is one of the early assembly proteins of the 50S ribosomal subunit, although it is not seen to bind rRNA by itself. It is important during the early stages of 50S assembly. The chain is Large ribosomal subunit protein uL13 from Teredinibacter turnerae (strain ATCC 39867 / T7901).